The sequence spans 117 residues: Immunoglobulin kappa variable 1D-43 (117 aa).

Residues 1–22 form the signal peptide; it reads MDMRVPAQRLGLLLLWFPGARC. Residues 23 to 45 are framework-1; the sequence is AIRMTQSPFSLSASVGDRVTITC. Positions 23 to 117 constitute an Ig-like domain; sequence AIRMTQSPFS…YYCQQYYSTP (95 aa). A disulfide bridge links Cys45 with Cys110. A complementarity-determining-1 region spans residues 46-56; that stretch reads WASQGISSYLA. A framework-2 region spans residues 57–71; sequence WYQQKPAKAPKLFIY. A complementarity-determining-2 region spans residues 72–78; it reads YASSLQS. Residues 79–110 form a framework-3 region; sequence GVPSRFSGSGSGTDYTLTISSLQPEDFATYYC. A complementarity-determining-3 region spans residues 111-117; sequence QQYYSTP.

Immunoglobulins are composed of two identical heavy chains and two identical light chains; disulfide-linked.

It is found in the secreted. Its subcellular location is the cell membrane. Its function is as follows. V region of the variable domain of immunoglobulin light chains that participates in the antigen recognition. Immunoglobulins, also known as antibodies, are membrane-bound or secreted glycoproteins produced by B lymphocytes. In the recognition phase of humoral immunity, the membrane-bound immunoglobulins serve as receptors which, upon binding of a specific antigen, trigger the clonal expansion and differentiation of B lymphocytes into immunoglobulins-secreting plasma cells. Secreted immunoglobulins mediate the effector phase of humoral immunity, which results in the elimination of bound antigens. The antigen binding site is formed by the variable domain of one heavy chain, together with that of its associated light chain. Thus, each immunoglobulin has two antigen binding sites with remarkable affinity for a particular antigen. The variable domains are assembled by a process called V-(D)-J rearrangement and can then be subjected to somatic hypermutations which, after exposure to antigen and selection, allow affinity maturation for a particular antigen. The polypeptide is Immunoglobulin kappa variable 1D-43 (Homo sapiens (Human)).